Here is an 84-residue protein sequence, read N- to C-terminus: Toxin-like TcoNTxP1 (84 aa).

The N-terminal stretch at 1-19 (MKRMILFTSCLLLIDIVVG) is a signal peptide. The LCN-type CS-alpha/beta domain maps to 21–82 (KEGYPADSKG…VWDSATNKCG (62 aa)). Disulfide bonds link Cys-31-Cys-81, Cys-35-Cys-57, Cys-43-Cys-62, and Cys-47-Cys-64. Cys-81 carries the post-translational modification Cysteine amide. The propeptide occupies 82–84 (GKK).

In terms of tissue distribution, expressed by the venom gland.

It localises to the secreted. This protein is not toxic. It induces an immune response similar to that induced by whole venom. Thus, polyclonal antibodies raised against this protein can neutralize the effects of the venom. The chain is Toxin-like TcoNTxP1 from Tityus costatus (Brazilian scorpion).